The primary structure comprises 832 residues: Disintegrin and metalloproteinase domain-containing protein 23 (832 aa).

Polar residues predominate over residues 1–10; the sequence is MKPPGSSSRQ. Residues 1-37 are disordered; it reads MKPPGSSSRQPPLAGCSLAGASCGPQRGPAGSVPASA. An N-terminal signal peptide occupies residues 1 to 59; the sequence is MKPPGSSSRQPPLAGCSLAGASCGPQRGPAGSVPASAPARTPPCRLLLVLLLLPPLAAS. Residues 28-37 show a composition bias toward low complexity; it reads GPAGSVPASA. The propeptide occupies 60–286; it reads SRPRAWGAAA…ELQWLKRRKR (227 aa). 4 N-linked (GlcNAc...) asparagine glycosylation sites follow: asparagine 76, asparagine 96, asparagine 100, and asparagine 263. Topologically, residues 287 to 792 are extracellular; the sequence is AVNPSRGIFE…EGPKGPSATN (506 aa). Residues 299 to 496 form the Peptidase M12B domain; the sequence is KYLELMIVND…GGGACLFNRP (198 aa). Disulfide bonds link cysteine 408–cysteine 491, cysteine 450–cysteine 475, and cysteine 452–cysteine 459. Residues 502-588 form the Disintegrin domain; sequence PTECGNGYVE…QCPPNLHKQD (87 aa). Asparagine 547 and asparagine 548 each carry an N-linked (GlcNAc...) asparagine glycan. A disulfide bridge connects residues cysteine 560 and cysteine 580. A may bind the integrin receptor region spans residues 563–568; the sequence is AVNECD. Asparagine 664 and asparagine 732 each carry an N-linked (GlcNAc...) asparagine glycan. Positions 732–769 constitute an EGF-like domain; the sequence is NMSSCPLDSKGKVCSGHGVCSNEATCICDFTWAGTDCS. Intrachain disulfides connect cysteine 736–cysteine 751, cysteine 745–cysteine 757, and cysteine 759–cysteine 768. Residues 793-813 traverse the membrane as a helical segment; it reads LIIGSIAGAILVAAIVLGGTG. Over 814 to 832 the chain is Cytoplasmic; sequence WGFKNVKKRRFDPTQQGPI.

Can bind to LGI1 and LGI4. Ligand for integrin alpha-V/beta-3. As to expression, highly expressed in the brain and weakly expressed in the heart. In the brain, expressed prominently in the amygdala, caudate nucleus, hypothalamus, thalamus, cerebral cortex and occipital pole.

The protein resides in the cell membrane. It is found in the secreted. May play a role in cell-cell and cell-matrix interactions. This is a non-catalytic metalloprotease-like protein. This is Disintegrin and metalloproteinase domain-containing protein 23 (ADAM23) from Homo sapiens (Human).